The sequence spans 55 residues: ATP synthase F(0) complex subunit 8 (55 aa).

The chain crosses the membrane as a helical span at residues 7–24 (SPWFFIMLTTWLTFSLII).

Belongs to the ATPase protein 8 family. Component of the ATP synthase complex composed at least of ATP5F1A/subunit alpha, ATP5F1B/subunit beta, ATP5MC1/subunit c (homooctomer), MT-ATP6/subunit a, MT-ATP8/subunit 8, ATP5ME/subunit e, ATP5MF/subunit f, ATP5MG/subunit g, ATP5MK/subunit k, ATP5MJ/subunit j, ATP5F1C/subunit gamma, ATP5F1D/subunit delta, ATP5F1E/subunit epsilon, ATP5PF/subunit F6, ATP5PB/subunit b, ATP5PD/subunit d, ATP5PO/subunit OSCP. ATP synthase complex consists of a soluble F(1) head domain (subunits alpha(3) and beta(3)) - the catalytic core - and a membrane F(0) domain - the membrane proton channel (subunits c, a, 8, e, f, g, k and j). These two domains are linked by a central stalk (subunits gamma, delta, and epsilon) rotating inside the F1 region and a stationary peripheral stalk (subunits F6, b, d, and OSCP).

It is found in the mitochondrion membrane. Subunit 8, of the mitochondrial membrane ATP synthase complex (F(1)F(0) ATP synthase or Complex V) that produces ATP from ADP in the presence of a proton gradient across the membrane which is generated by electron transport complexes of the respiratory chain. ATP synthase complex consist of a soluble F(1) head domain - the catalytic core - and a membrane F(1) domain - the membrane proton channel. These two domains are linked by a central stalk rotating inside the F(1) region and a stationary peripheral stalk. During catalysis, ATP synthesis in the catalytic domain of F(1) is coupled via a rotary mechanism of the central stalk subunits to proton translocation. In vivo, can only synthesize ATP although its ATP hydrolase activity can be activated artificially in vitro. Part of the complex F(0) domain. The polypeptide is ATP synthase F(0) complex subunit 8 (Columbina passerina (Common ground-dove)).